We begin with the raw amino-acid sequence, 376 residues long: Chaperone protein DnaJ (376 aa).

The 66-residue stretch at 5-70 (DYYEILGVSK…QKRAAYDQYG (66 aa)) folds into the J domain. The CR-type zinc-finger motif lies at 131–209 (GVTKEIRIPT…CHGHGRVERS (79 aa)). Residues C144, C147, C161, C164, C183, C186, C197, and C200 each contribute to the Zn(2+) site. CXXCXGXG motif repeat units lie at residues 144–151 (CDVCHGSG), 161–168 (CPTCHGSG), 183–190 (CPHCQGRG), and 197–204 (CNKCHGHG).

It belongs to the DnaJ family. As to quaternary structure, homodimer. It depends on Zn(2+) as a cofactor.

It localises to the cytoplasm. Participates actively in the response to hyperosmotic and heat shock by preventing the aggregation of stress-denatured proteins and by disaggregating proteins, also in an autonomous, DnaK-independent fashion. Unfolded proteins bind initially to DnaJ; upon interaction with the DnaJ-bound protein, DnaK hydrolyzes its bound ATP, resulting in the formation of a stable complex. GrpE releases ADP from DnaK; ATP binding to DnaK triggers the release of the substrate protein, thus completing the reaction cycle. Several rounds of ATP-dependent interactions between DnaJ, DnaK and GrpE are required for fully efficient folding. Also involved, together with DnaK and GrpE, in the DNA replication of plasmids through activation of initiation proteins. The sequence is that of Chaperone protein DnaJ from Escherichia coli O157:H7 (strain EC4115 / EHEC).